The chain runs to 249 residues: Elsinochromes biosynthesis cluster protein HP3 (249 aa).

A glycan (N-linked (GlcNAc...) asparagine) is linked at N106. Residues 138–158 traverse the membrane as a helical segment; sequence VVFAFMLSAWLVWLITVYAFA.

The protein resides in the membrane. Its function is as follows. Part of the gene cluster that mediates the biosynthesis of elsinochromes, pigments consisting of at least four interconvertible tautomers (A, B, C and D) that have a core phenolic quinone to which various side chains are attached and which play an important role in fungal pathogenesis. The non-reducing polyketide synthase PKS1 was proposed to iteratively catalyze decarboxylation between acetyl-CoA and malonyl-CoA subunits for polyketide chain elongation. The released polyketide undergoes cyclization to form an aromatic ring, and proceeds via serial modification steps to produce the heptaketide back- bone of elsinochrome. As elsinochrome has a symmetrical structure, two identical heptaketides are fused to form a core 1,2-dihydrobenzo-perylene ring structure, which can then be successively modified to produce the various derivatives of elsinochrome. Some of these reactions may be cooperatively carried out, at least in part, by the products of RDT1, OXR1 and PKS1. PRF1, embedded within the elsinochrome cluster possibly functions to stabilize some of the biosynthetic enzymes required for elsinochrome production. As prefoldin is a hexamer containing 2 a and 4 b subunits, additional prefoldin subunits, whose coding genes may not immediately link to the elsinochrome biosynthetic gene cluster, are required to fulfill the chaperone function. In addition, no methyltransferase-coding gene exists within the biosynthetic gene cluster, even though elsinochrome has four methyl groups at positions C3, C7, C8 and C12. Apparently, the identified gene cluster does not contain the entire entourage of genes responsible for elsinochrome biosynthesis. Once elsinochrome is synthesized, it must be exported outside the fungal cells, which is probably accomplished by the ECT1 transporter, to avoid toxicity. This is Elsinochromes biosynthesis cluster protein HP3 from Elsinoe fawcettii (Citrus scab fungus).